A 128-amino-acid chain; its full sequence is MEVVNAIGRRKAAVARVFVSEGTGKITINKRELEKYFPSSILQFIVKQPLAKLNVAEQYDIKINLDGGGFKGQSEAARLAISRALIKINPEDKAVLRAEGFVTRDPRAVERKKPGRPKARKRFQFSKR.

The segment at 107 to 128 (RAVERKKPGRPKARKRFQFSKR) is disordered. Residues 113–128 (KPGRPKARKRFQFSKR) are compositionally biased toward basic residues.

Belongs to the universal ribosomal protein uS9 family.

The protein is Small ribosomal subunit protein uS9 of Parabacteroides distasonis (strain ATCC 8503 / DSM 20701 / CIP 104284 / JCM 5825 / NCTC 11152).